A 212-amino-acid chain; its full sequence is Ribosomal RNA small subunit methyltransferase G (212 aa).

Residues Gly-80, Leu-85, 131–132 (AE), and Arg-146 contribute to the S-adenosyl-L-methionine site.

Belongs to the methyltransferase superfamily. RNA methyltransferase RsmG family.

The protein localises to the cytoplasm. It catalyses the reaction guanosine(527) in 16S rRNA + S-adenosyl-L-methionine = N(7)-methylguanosine(527) in 16S rRNA + S-adenosyl-L-homocysteine. Functionally, specifically methylates the N7 position of guanine in position 527 of 16S rRNA. In Xanthomonas euvesicatoria pv. vesicatoria (strain 85-10) (Xanthomonas campestris pv. vesicatoria), this protein is Ribosomal RNA small subunit methyltransferase G.